Consider the following 459-residue polypeptide: Cyclic GMP-AMP synthase-like receptor 2 (459 aa).

ATP-binding positions include serine 68 and 79–81 (EFD). Residues glutamate 79, aspartate 81, and aspartate 199 each contribute to the Mg(2+) site. GTP contacts are provided by residues aspartate 199 and 248–255 (RSSFYAVE). 252-255 (YAVE) lines the ATP pocket. Histidine 263 serves as a coordination point for Zn(2+). ATP-binding positions include lysine 274 and 288 to 292 (SYYIK).

The protein belongs to the mab-21 family. Requires Mg(2+) as cofactor. The cofactor is Mn(2+).

It carries out the reaction GTP + ATP = 3',2'-cGAMP + 2 diphosphate. It catalyses the reaction GTP + ATP = 2',3'-cGAMP + 2 diphosphate. The catalysed reaction is GTP + ATP = pppGp(2'-5')A + diphosphate. The enzyme catalyses pppA(2'-5')pG = 3',2'-cGAMP + diphosphate. It carries out the reaction pppGp(2'-5')A = 2',3'-cGAMP + diphosphate. Its activity is regulated as follows. The enzyme activity is specifically activated by some nucleic acid. In terms of biological role, nucleotidyltransferase that catalyzes the formation of cyclic GMP-AMP from ATP and GTP and plays a key role in antiviral innate immunity. Directly binds some unknown nucleic acid, activating the nucleotidyltransferase activity, leading to synthesis of both 3',2'-cGAMP and 2',3'-cGAMP second messengers. 3',2'-cGAMP and 2',3'-cGAMP bind to and activate Sting, thereby triggering the antiviral immune response via activation of the NF-kappa-B transcription factor Rel (Relish). The sequence is that of Cyclic GMP-AMP synthase-like receptor 2 from Drosophila melanogaster (Fruit fly).